The following is a 413-amino-acid chain: S-adenosylmethionine synthase (413 aa).

Residue His-15 participates in ATP binding. Asp-17 serves as a coordination point for Mg(2+). Glu-43 provides a ligand contact to K(+). The L-methionine site is built by Glu-56 and Gln-100. Residues Gln-100 to Glu-110 form a flexible loop region. ATP contacts are provided by residues Asp-171–Lys-173, Lys-248–Phe-249, Asp-257, Arg-263–Lys-264, Ala-280, and Lys-284. Asp-257 serves as a coordination point for L-methionine. Residue Lys-288 participates in L-methionine binding.

This sequence belongs to the AdoMet synthase family. As to quaternary structure, homotetramer; dimer of dimers. Mg(2+) serves as cofactor. The cofactor is K(+).

The protein resides in the cytoplasm. The catalysed reaction is L-methionine + ATP + H2O = S-adenosyl-L-methionine + phosphate + diphosphate. It participates in amino-acid biosynthesis; S-adenosyl-L-methionine biosynthesis; S-adenosyl-L-methionine from L-methionine: step 1/1. In terms of biological role, catalyzes the formation of S-adenosylmethionine (AdoMet) from methionine and ATP. The overall synthetic reaction is composed of two sequential steps, AdoMet formation and the subsequent tripolyphosphate hydrolysis which occurs prior to release of AdoMet from the enzyme. This is S-adenosylmethionine synthase from Prochlorococcus marinus (strain AS9601).